The following is a 378-amino-acid chain: UPF0754 membrane protein BCAH820_0954 (378 aa).

2 helical membrane-spanning segments follow: residues 1 to 21 (MNIWLSMLTTTGLGAIIGGFT) and 357 to 377 (YLGALLGGMIGIVQGLLLLFL).

This sequence belongs to the UPF0754 family.

It localises to the cell membrane. This chain is UPF0754 membrane protein BCAH820_0954, found in Bacillus cereus (strain AH820).